A 642-amino-acid polypeptide reads, in one-letter code: MVAGKVRVTMGFHKSPSTKKTKDMPSPLPLPPPPPPPLKPPSSGSATTKPPINPSKPGFTRSFGVYFPRASAQVHATAAAASHNGVVSELRRQVEELREREALLKTENLEVKLLRESVSVIPLLESQIADKNGEIDELRKETARLAEDNERLRREFDRSEEMRRECETREKEMEAEIVELRKLVSSESDDHALSVSQRFQGLMDVSAKSNLIRSLKRVGSLRNLPEPITNQENTNKSISSSGDADGDIYRKDEIESYSRSSNSEELTESSSLSTVRSRVPRVPKPPPKRSISLGDSTENRADPPPQKSIPPPPPPPPPPLLQQPPPPPSVSKAPPPPPPPPPPKSLSIASAKVRRVPEVVEFYHSLMRRDSTNSRRDSTGGGNAAAEAILANSNARDMIGEIENRSVYLLAIKTDVETQGDFIRFLIKEVGNAAFSDIEDVVPFVKWLDDELSYLVDERAVLKHFEWPEQKADALREAAFCYFDLKKLISEASRFREDPRQSSSSALKKMQALFEKLEHGVYSLSRMRESAATKFKSFQIPVDWMLETGITSQIKLASVKLAMKYMKRVSAELEAIEGGGPEEEELIVQGVRFAFRVHQFAGGFDAETMKAFEELRDKARSCHVQCQSQTHQHKLCFRSTPC.

Residues 1–60 (MVAGKVRVTMGFHKSPSTKKTKDMPSPLPLPPPPPPPLKPPSSGSATTKPPINPSKPGFT) are disordered. The segment covering 26-40 (SPLPLPPPPPPPLKP) has biased composition (pro residues). Residues 80–183 (AASHNGVVSE…EAEIVELRKL (104 aa)) adopt a coiled-coil conformation. Positions 223 to 351 (NLPEPITNQE…PPKSLSIASA (129 aa)) are disordered. Positions 247-256 (DIYRKDEIES) are enriched in basic and acidic residues. Positions 258–277 (SRSSNSEELTESSSLSTVRS) are enriched in low complexity. Residues 302-344 (DPPPQKSIPPPPPPPPPPLLQQPPPPPSVSKAPPPPPPPPPPK) show a composition bias toward pro residues.

It belongs to the IPGA1 family. Associates to cortical microtubules via its N-terminal region. Interacts with ANGUSTIFOLIA (AN) on microtubule upon mechanical stress to regulate microtubule organization. Binds to the microtubule-severing enzyme KATANIN (KTN1). In terms of tissue distribution, expressed ubiquitously at all development stages, with highest in developing petals. During mechanical stress, accumulates in granules on microtubules.

The protein localises to the cytoplasm. The protein resides in the cytoskeleton. It localises to the cytosol. It is found in the cell membrane. Functionally, microtubule-associated protein involved in the regulation of anisotropic petal and cotyledons growth and shape by affecting cortical microtubule organization. Prevents cortical microtubules organization into parallel arrays oriented perpendicular to the axis of cell elongation thus limiting anisotropic cell growth in the late phases of petal development. Cooperatively with ANGUSTIFOLIA (AN), negatively regulates cortical microtubules (CMTs) organization in response to mechanical stress and modulates pavement cells morphogenesis leading to puzzle shape, probably in an AAA1/KTN1-dependent manner. The chain is Protein INCREASED PETAL GROWTH ANISOTROPY 1 from Arabidopsis thaliana (Mouse-ear cress).